A 321-amino-acid polypeptide reads, in one-letter code: tRNA-dihydrouridine synthase B (321 aa).

FMN is bound by residues proline 16 to alanine 18 and glutamine 70. The active-site Proton donor is cysteine 100. FMN is bound by residues lysine 139, asparagine 200 to aspartate 202, and glycine 224 to arginine 225.

The protein belongs to the Dus family. DusB subfamily. FMN is required as a cofactor.

It carries out the reaction a 5,6-dihydrouridine in tRNA + NAD(+) = a uridine in tRNA + NADH + H(+). It catalyses the reaction a 5,6-dihydrouridine in tRNA + NADP(+) = a uridine in tRNA + NADPH + H(+). In terms of biological role, catalyzes the synthesis of 5,6-dihydrouridine (D), a modified base found in the D-loop of most tRNAs, via the reduction of the C5-C6 double bond in target uridines. The protein is tRNA-dihydrouridine synthase B of Klebsiella pneumoniae.